The primary structure comprises 428 residues: Transcription factor bHLH91 (428 aa).

A bHLH domain is found at 210-259 (KRKNKPFTTERERRCHLNERYEALKLLIPSPSKGDRASILQDGIDYINEL). The segment at 278–320 (RHKNNEVDDNNNNKNLDDHGNEDDDDDDENMEKKPESDVIDQC) is disordered. Positions 297–307 (GNEDDDDDDEN) are enriched in acidic residues.

Homodimer. As to expression, flowers.

The protein resides in the nucleus. The polypeptide is Transcription factor bHLH91 (BHLH91) (Arabidopsis thaliana (Mouse-ear cress)).